Consider the following 102-residue polypeptide: Acid shock protein (102 aa).

Residues 1 to 21 form the signal peptide; sequence MKKVLALVVAAAMGLSSAAFA. Low complexity predominate over residues 22-41; that stretch reads AETATTPAPTATTTKAAPAK. Positions 22 to 58 are excised as a propeptide; sequence AETATTPAPTATTTKAAPAKTTHHKKQHKAAPAQKAQ. Residues 22-102 form a disordered region; it reads AETATTPAPT…PAKPAAQPAA (81 aa). Positions 80–90 are enriched in basic residues; the sequence is AAKKHAKKHSH. The span at 91-102 shows a compositional bias: low complexity; sequence QQPAKPAAQPAA.

Belongs to the Asr family. Proteolytic processing gives rise to the active protein.

It is found in the periplasm. Its function is as follows. Required for growth and/or survival at acidic conditions. The sequence is that of Acid shock protein from Escherichia coli O45:K1 (strain S88 / ExPEC).